Consider the following 459-residue polypeptide: Trigger factor (459 aa).

The 80-residue stretch at 166–245 (GDFANIDLTA…VNSVKAEELP (80 aa)) folds into the PPIase FKBP-type domain.

It belongs to the FKBP-type PPIase family. Tig subfamily.

Its subcellular location is the cytoplasm. The catalysed reaction is [protein]-peptidylproline (omega=180) = [protein]-peptidylproline (omega=0). Its function is as follows. Involved in protein export. Acts as a chaperone by maintaining the newly synthesized protein in an open conformation. Functions as a peptidyl-prolyl cis-trans isomerase. The polypeptide is Trigger factor (Bifidobacterium longum subsp. infantis (strain ATCC 15697 / DSM 20088 / JCM 1222 / NCTC 11817 / S12)).